Reading from the N-terminus, the 182-residue chain is Peptidyl-prolyl cis-trans isomerase H (182 aa).

The 167-residue stretch at 15 to 181 (FFDITLGGEP…LDVVIAQCGE (167 aa)) folds into the PPIase cyclophilin-type domain.

The protein belongs to the cyclophilin-type PPIase family. PPIase H subfamily.

The protein localises to the nucleus. It carries out the reaction [protein]-peptidylproline (omega=180) = [protein]-peptidylproline (omega=0). In terms of biological role, PPIases accelerate the folding of proteins. It catalyzes the cis-trans isomerization of proline imidic peptide bonds in oligopeptides. The protein is Peptidyl-prolyl cis-trans isomerase H (cyp-3) of Neurospora crassa (strain ATCC 24698 / 74-OR23-1A / CBS 708.71 / DSM 1257 / FGSC 987).